A 90-amino-acid polypeptide reads, in one-letter code: Arminin 7722 (90 aa).

An N-terminal signal peptide occupies residues 1–18 (MRSASLILFVAIVALTYA). Positions 19–59 (RSYEDIKEEIRNEVENEILDDLEEENDELDDNAQEVSDPRA) are excised as a propeptide. Thr87 is modified (threonine amide).

It belongs to the arminin family. Expressed in entodermal epithelium along the body column.

It is found in the secreted. It localises to the target cell membrane. Functionally, antimicrobial peptide with a broad-spectrum antimicrobial activity. Keeps its antibacterial activity under a wide range of salt concentrations that mimic physiological conditions of human blood, which is surprising, since Hydra is an obligate freshwater animal with nearly no salt tolerance. Does not affect red blood cells. This is Arminin 7722 from Hydra vulgaris (Hydra).